Here is a 240-residue protein sequence, read N- to C-terminus: Lactate utilization protein C (240 aa).

The protein belongs to the LutC/YkgG family.

Is involved in L-lactate degradation and allows cells to grow with lactate as the sole carbon source. The polypeptide is Lactate utilization protein C (Geobacillus kaustophilus (strain HTA426)).